The sequence spans 1920 residues: MVVPQKKFANGKRNDSTKSFKPMKKPFKKTKDDVAARSEAMALQLEDVPDFPRGGGTSLSKKEREKLYEEVDAEFDADERVSKKSKGGKSKKRIPSDLDDLGLLFGGGLHGKRPRYANKITTKNISPGMKLLGVVTEVNQKDIVISLPGGLRGLVRASEVSDFTDRGIEDDENELLGDIFSVGQLVPCIVLELDDDKKEAGKRKIWLSLRLSLLHKGFSFDSFQLGMVFSANVKSIEDHGSILHFGLPSITGFIEISDDGNQESGMKTGQLIQGVVTKIDRDRKIVHLSSDPDSVAKCLTKDLSGMSFDLLIPGMMVNARVQSVLENGILFDFLTYFNGTVDLFHLKNPLSNKSWKDEYNQNKTVNARILFIDPSSRAVGLTLSPHVVCNKAPPLHVFSGDIFDEAKVVRIDKSGLLLELPSKPTPTPAYVSTYDAAGDEVTKLEKKFKEGNHIRVRVLGLKQMEGLAVGTLKESAFEGPVFTHSDVKPGMVTKAKVISVDTFGAIVQFSGGLKAMCPLRHMSEFEVTKPRKKFKVGAELVFRVLGCKSKRITVTYKKTLVKSKLPILSSYTDATEGLVTHGWITKIEKHGCFVRFYNGVQGFVPRFELGLEPGSDPDSVFHVGEVVKCRVTSAVHGTQRITLSFMIKPSSVSEDDSIKLGSIVSGIIDTITSQAVIVRVKSKSVVKGTISAEHLADHHEQAKLIMSLLRPGYELDKLLVLDIEGNNMALSSKYSLIKLAEELPSDFNQLQPNSVVHGYVCNLIENGCFVRFLGRLTGFAPRSKAIDDPKADVSESFFVGQSVRANIVDVNQEKSRITLSLKQSSCASVDASFVQEYFLMDEKISDLQSSDITKSDCSWVEKFSIGSLIKGTIQEQNDLGVVVNFDNINNVLGFIPQHHMGGATLVPGSVVNAVVLDISRAERLVDLSLRPELLNNLTKEVSNSSKKKRKRGISKELEVHQRVSAVVEIVKEQHLVLSIPEHGYTIGYASVSDYNTQKLPVKQFSTGQSVVASVKAVQNPLTSGRLLLLLDSVSGTSETSRSKRAKKKSSCEVGSVVHAEITEIKPFELRVNFGNSFRGRIHITEVNDASTSDEPFAKFRVGQSISARVVAKPCHTDIKKTQLWELSVKPAMLKDSSEFNDTQESEQLEFAAGQCVIGYVYKVDKEWVWLAVSRNVTARIFILDTSCKAHELEEFERRFPIGKAVSGYVLTYNKEKKTLRLVQRPLLFIHKSIANGGGSKTDKPDSSIPGDDDTLFIHEGDILGGRISKILPGVGGLRVQLGPYVFGRVHFTEINDSWVPDPLDGFREGQFVKCKVLEISSSSKGTWQIELSLRTSLDGMSSADHLSEDLKNNDNVCKRFERIEDLSPDMGVQGYVKNTMSKGCFIILSRTVEAKVRLSNLCDTFVKEPEKEFPVGKLVTGRVLNVEPLSKRIEVTLKTVNAGGRPKSESYDLKKLHVGDMISGRIRRVEPFGLFIDIDQTGMVGLCHISQLSDDRMENVQARYKAGESVRAKILKLDEEKKRISLGMKSSYLMNGDDDKAQPLSEDNTSMECDPINDPKSEVLAAVDDFGFQETSGGTSLVLAQVESRASIPPLEVDLDDIEETDFDSSQNQEKLLGANKDEKSKRREKQKDKEEREKKIQAAEGRLLEHHAPENADEFEKLVRSSPNSSFVWIKYMAFMLSLADIEKARSIAERALRTINIREEEEKLNIWVAYFNLENEHGNPPEESVKKVFERARQYCDPKKVYLALLGVYERTEQYKLADKLLDEMIKKFKQSCKIWLRKIQSSLKQNEEAIQSVVNRALLCLPRHKHIKFISQTAILEFKCGVADRGRSLFEGVLREYPKRTDLWSVYLDQEIRLGEDDVIRSLFERAISLSLPPKKMKFLFKKFLEYEKSVGDEERVEYVKQRAMEYANSTLA.

The disordered stretch occupies residues 1–65 (MVVPQKKFAN…GTSLSKKERE (65 aa)). 15 consecutive S1 motif domains span residues 128–210 (GMKL…LSLR), 226–291 (GMVF…LSSD), 314–384 (GMMV…LTLS), 400–473 (GDIF…GTLK), 490–557 (GMVT…VTYK), 577–646 (GLVT…LSFM), 661–733 (GSIV…LSSK), 753–822 (NSVV…LSLK), 866–930 (GSLI…LSLR), 958–1031 (EVHQ…LLLD), 1054–1129 (GSVV…LSVK), 1153–1224 (GQCV…LVQR), 1260–1334 (GDIL…LSLR), 1369–1438 (DMGV…VTLK), and 1459–1529 (GDMI…LGMK). 2 disordered regions span residues 1535–1555 (NGDD…ECDP) and 1605–1652 (TDFD…LEHH). A compositionally biased stretch (basic and acidic residues) spans 1620–1652 (NKDEKSKRREKQKDKEEREKKIQAAEGRLLEHH). 6 HAT repeats span residues 1651–1683 (HHAP…FMLS), 1685–1722 (ADIE…LENE), 1726–1758 (PPEE…YERT), 1759–1791 (EQYK…SSLK), 1828–1860 (GVAD…QEIR), and 1862–1897 (GEDD…YEKS).

Highly expressed in flowers and at lower levels in roots, leaves, stems and siliques.

The protein localises to the nucleus. The protein resides in the nucleolus. Involved in the biogenesis of ribosomal RNA (rRNA). Required for the formation of 5.8S rRNA. Required for normal development of female gametophytes. This Arabidopsis thaliana (Mouse-ear cress) protein is rRNA biogenesis protein RRP5.